A 53-amino-acid polypeptide reads, in one-letter code: UPF0391 membrane protein YPDSF_3201 (53 aa).

A run of 2 helical transmembrane segments spans residues 4–24 (WGII…GGLA) and 27–47 (AAWA…ISLF).

Belongs to the UPF0391 family.

It localises to the cell membrane. The sequence is that of UPF0391 membrane protein YPDSF_3201 from Yersinia pestis (strain Pestoides F).